We begin with the raw amino-acid sequence, 316 residues long: Transaldolase (316 aa).

The active-site Schiff-base intermediate with substrate is Lys131.

This sequence belongs to the transaldolase family. Type 1 subfamily. In terms of assembly, homodimer.

The protein resides in the cytoplasm. It carries out the reaction D-sedoheptulose 7-phosphate + D-glyceraldehyde 3-phosphate = D-erythrose 4-phosphate + beta-D-fructose 6-phosphate. It functions in the pathway carbohydrate degradation; pentose phosphate pathway; D-glyceraldehyde 3-phosphate and beta-D-fructose 6-phosphate from D-ribose 5-phosphate and D-xylulose 5-phosphate (non-oxidative stage): step 2/3. Transaldolase is important for the balance of metabolites in the pentose-phosphate pathway. In Chromohalobacter salexigens (strain ATCC BAA-138 / DSM 3043 / CIP 106854 / NCIMB 13768 / 1H11), this protein is Transaldolase.